We begin with the raw amino-acid sequence, 315 residues long: PDZ domain-containing protein GIPC2 (315 aa).

Basic residues predominate over residues 1-12 (MPLKLRGKKKAK). The disordered stretch occupies residues 1–34 (MPLKLRGKKKAKSKETAGLVEGEPTGAGGGSLSA). The PDZ domain occupies 117–197 (EVNVYKSEDS…EELFTMKLIE (81 aa)).

It belongs to the GIPC family. As to quaternary structure, probably interacts with SEMA5A. In terms of tissue distribution, expressed at highest levels in ascending colon and at moderate levels in adult kidney. Expressed at low levels in adult pancreas and at very low levels in adult liver. Expression is down-regulated in several primary tumors, such as kidney, colon and rectal tumors.

The protein resides in the cytoplasm. The protein is PDZ domain-containing protein GIPC2 (GIPC2) of Homo sapiens (Human).